Consider the following 78-residue polypeptide: Large ribosomal subunit protein bL28 (78 aa).

The disordered stretch occupies residues 1 to 21; sequence MSRVCQVTGKRPMVGNNRSHA.

This sequence belongs to the bacterial ribosomal protein bL28 family.

This chain is Large ribosomal subunit protein bL28, found in Shewanella halifaxensis (strain HAW-EB4).